The primary structure comprises 505 residues: Lysine--tRNA ligase (505 aa).

Mg(2+) is bound by residues glutamate 415 and glutamate 422.

It belongs to the class-II aminoacyl-tRNA synthetase family. Homodimer. Requires Mg(2+) as cofactor.

The protein localises to the cytoplasm. It catalyses the reaction tRNA(Lys) + L-lysine + ATP = L-lysyl-tRNA(Lys) + AMP + diphosphate. In Shigella boydii serotype 4 (strain Sb227), this protein is Lysine--tRNA ligase.